We begin with the raw amino-acid sequence, 141 residues long: Hemoglobin subunit alpha (141 aa).

A Globin domain is found at 1-141 (VLSASDKTNL…VSTVLTSKYR (141 aa)). Ser-3 carries the post-translational modification Phosphoserine. Lys-7 is modified (N6-succinyllysine). A Phosphothreonine modification is found at Thr-8. Position 11 is an N6-succinyllysine (Lys-11). Position 16 is an N6-acetyllysine; alternate (Lys-16). Lys-16 bears the N6-succinyllysine; alternate mark. Tyr-24 bears the Phosphotyrosine mark. Residue Ser-35 is modified to Phosphoserine. Position 40 is an N6-succinyllysine (Lys-40). Ser-49 is subject to Phosphoserine. Position 58 (His-58) interacts with O2. His-87 contacts heme b. Phosphoserine is present on Ser-102. Phosphothreonine is present on Thr-108. Ser-124 carries the post-translational modification Phosphoserine. Phosphothreonine occurs at positions 134 and 137. Ser-138 bears the Phosphoserine mark.

This sequence belongs to the globin family. Heterotetramer of two alpha chains and two beta chains. In terms of tissue distribution, red blood cells.

Involved in oxygen transport from the lung to the various peripheral tissues. The sequence is that of Hemoglobin subunit alpha from Blarina brevicauda (Northern short-tailed shrew).